Here is a 244-residue protein sequence, read N- to C-terminus: Short-chain dehydrogenase/reductase family member NovK (244 aa).

NADP(+) contacts are provided by residues 9–12, 59–60, and 154–158; these read GGGE, EL, and RPVLD.

It belongs to the short-chain dehydrogenases/reductases (SDR) family. As to quaternary structure, heterotetramer; the NovJ(2)K(2) heterotetramer is composed of subunits of 2 NovJ and 2 subunits of NovK.

It participates in antibiotic biosynthesis; novobiocin biosynthesis. Non-catalytic subunit of the NovJ(2)K(2) heterotetramer that catalyzes the NADPH-dependent reduction of the tyrosyl moiety of L-beta-OH-Tyr-S-NovH intermediate to yield the tethered beta-ketotyrosyl-S-NovH in the novobiocin biosynthesis pathway. Novobiocin is an aminocoumarin family antibiotic that targets bacterial DNA gyrases. This is Short-chain dehydrogenase/reductase family member NovK (novK) from Streptomyces niveus (Streptomyces spheroides).